A 797-amino-acid chain; its full sequence is Complex I intermediate-associated protein 84, mitochondrial (797 aa).

Residues Met-1–Thr-69 constitute a mitochondrion transit peptide.

It is found in the mitochondrion. In terms of biological role, chaperone protein involved in the assembly of the mitochondrial NADH:ubiquinone oxidoreductase complex (complex I). This is Complex I intermediate-associated protein 84, mitochondrial (cia84) from Neurospora crassa (strain ATCC 24698 / 74-OR23-1A / CBS 708.71 / DSM 1257 / FGSC 987).